Reading from the N-terminus, the 431-residue chain is 3-phosphoshikimate 1-carboxyvinyltransferase (431 aa).

Residues lysine 22, serine 23, and arginine 27 each coordinate 3-phosphoshikimate. Residue lysine 22 participates in phosphoenolpyruvate binding. Phosphoenolpyruvate contacts are provided by glycine 94 and arginine 122. 3-phosphoshikimate-binding residues include serine 167, glutamine 169, aspartate 314, and lysine 341. Glutamine 169 is a phosphoenolpyruvate binding site. Residue aspartate 314 is the Proton acceptor of the active site. Phosphoenolpyruvate contacts are provided by arginine 345 and arginine 391.

This sequence belongs to the EPSP synthase family. In terms of assembly, monomer.

The protein localises to the cytoplasm. The catalysed reaction is 3-phosphoshikimate + phosphoenolpyruvate = 5-O-(1-carboxyvinyl)-3-phosphoshikimate + phosphate. Its pathway is metabolic intermediate biosynthesis; chorismate biosynthesis; chorismate from D-erythrose 4-phosphate and phosphoenolpyruvate: step 6/7. Its function is as follows. Catalyzes the transfer of the enolpyruvyl moiety of phosphoenolpyruvate (PEP) to the 5-hydroxyl of shikimate-3-phosphate (S3P) to produce enolpyruvyl shikimate-3-phosphate and inorganic phosphate. The chain is 3-phosphoshikimate 1-carboxyvinyltransferase from Leuconostoc citreum (strain KM20).